Reading from the N-terminus, the 553-residue chain is Glutamate--tRNA ligase (553 aa).

The 'HIGH' region motif lies at 98 to 108; that stretch reads PNPSGPLHIGH.

The protein belongs to the class-I aminoacyl-tRNA synthetase family. Glutamate--tRNA ligase type 2 subfamily.

The protein localises to the cytoplasm. It catalyses the reaction tRNA(Glu) + L-glutamate + ATP = L-glutamyl-tRNA(Glu) + AMP + diphosphate. Its function is as follows. Catalyzes the attachment of glutamate to tRNA(Glu) in a two-step reaction: glutamate is first activated by ATP to form Glu-AMP and then transferred to the acceptor end of tRNA(Glu). This Methanocaldococcus jannaschii (strain ATCC 43067 / DSM 2661 / JAL-1 / JCM 10045 / NBRC 100440) (Methanococcus jannaschii) protein is Glutamate--tRNA ligase.